A 317-amino-acid chain; its full sequence is Ribosomal protein L11 methyltransferase (317 aa).

Thr158, Gly179, Asp201, and Asn244 together coordinate S-adenosyl-L-methionine.

Belongs to the methyltransferase superfamily. PrmA family.

It localises to the cytoplasm. The enzyme catalyses L-lysyl-[protein] + 3 S-adenosyl-L-methionine = N(6),N(6),N(6)-trimethyl-L-lysyl-[protein] + 3 S-adenosyl-L-homocysteine + 3 H(+). Functionally, methylates ribosomal protein L11. In Lactococcus lactis subsp. cremoris (strain MG1363), this protein is Ribosomal protein L11 methyltransferase.